Consider the following 265-residue polypeptide: Small ribosomal subunit protein uS2 (265 aa).

It belongs to the universal ribosomal protein uS2 family.

The chain is Small ribosomal subunit protein uS2 from Ligilactobacillus salivarius (strain UCC118) (Lactobacillus salivarius).